Reading from the N-terminus, the 93-residue chain is UPF0521 protein A (93 aa).

A coiled-coil region spans residues 2-58; the sequence is SLKEVITSLKNDFHSINKEIDSMKENNEKQEDKIFQEIKKLKLEMELLRKDNLSFKT.

The protein belongs to the UPF0521 family.

The sequence is that of UPF0521 protein A from Dictyostelium discoideum (Social amoeba).